Consider the following 519-residue polypeptide: Cytosol aminopeptidase (519 aa).

A Phosphoserine modification is found at S42. K45 is modified (N6-succinyllysine). S54 is subject to Phosphoserine. An N6-succinyllysine mark is found at K61 and K103. Residues S180 and S194 each carry the phosphoserine modification. L202, M203, and T205 together coordinate Zn(2+). S238 bears the Phosphoserine mark. Zn(2+) contacts are provided by K282 and D287. K282, D287, S292, and K294 together coordinate substrate. D287 serves as a coordination point for Mg(2+). The active site involves K294. R303, D305, D364, and E366 together coordinate Zn(2+). Positions 305 and 364 each coordinate substrate. The Mg(2+) site is built by D364 and E366. R368 is an active-site residue. K455 is subject to N6-acetyllysine; alternate. K455 carries the N6-succinyllysine; alternate modification. Residue K476 is modified to N6-succinyllysine. K489 carries the post-translational modification N6-acetyllysine; alternate. K489 is subject to N6-succinyllysine; alternate.

This sequence belongs to the peptidase M17 family. Homohexamer. It depends on Zn(2+) as a cofactor. The cofactor is Mn(2+).

The protein resides in the cytoplasm. It carries out the reaction Release of an N-terminal amino acid, Xaa-|-Yaa-, in which Xaa is preferably Leu, but may be other amino acids including Pro although not Arg or Lys, and Yaa may be Pro. Amino acid amides and methyl esters are also readily hydrolyzed, but rates on arylamides are exceedingly low.. The enzyme catalyses an S-substituted L-cysteinylglycine + H2O = an S-substituted L-cysteine + glycine. It catalyses the reaction L-cysteinylglycine + H2O = L-cysteine + glycine. The catalysed reaction is S-benzyl-L-cysteinylglycine + H2O = S-benzyl-L-cysteine + glycine. It carries out the reaction Release of N-terminal proline from a peptide.. Its activity is regulated as follows. Zofenoprilat inhibits Cys-Gly hydrolysis activity. Cytosolic metallopeptidase that catalyzes the removal of unsubstituted N-terminal hydrophobic amino acids from various peptides. The presence of Zn(2+) ions is essential for the peptidase activity, and the association with other cofactors can modulate the substrate spectificity of the enzyme. For instance, in the presence of Mn(2+), it displays a specific Cys-Gly hydrolyzing activity of Cys-Gly-S-conjugates. Involved in the metabolism of glutathione and in the degradation of glutathione S-conjugates, which may play a role in the control of the cell redox status. This Bos taurus (Bovine) protein is Cytosol aminopeptidase.